Reading from the N-terminus, the 389-residue chain is Phospho-N-acetylmuramoyl-pentapeptide-transferase (389 aa).

10 helical membrane-spanning segments follow: residues 25 to 45, 73 to 93, 97 to 117, 135 to 155, 190 to 210, 222 to 242, 258 to 278, 286 to 306, 311 to 331, and 366 to 386; these read RAVMATITALGIGLVCGPWVI, TMGGVLILIGIAVATLLWGDL, FIWIVMLVTFGFGVIGWVDDY, FWQSVIGLFAAVYLAFSVSEA, ISYPLGVWGFIVLTYFVIVGA, GLVIMPVVLVGASLGVFAYVM, GAGELLIFCSAMGGAGLAFLW, VFMGDVGALALGGALGTVAVI, IVLFIMGGIFVAETLSVMLQV, and QVVVRFWIITLMLCLFGLSTL.

Belongs to the glycosyltransferase 4 family. MraY subfamily. It depends on Mg(2+) as a cofactor.

The protein localises to the cell inner membrane. It carries out the reaction UDP-N-acetyl-alpha-D-muramoyl-L-alanyl-gamma-D-glutamyl-meso-2,6-diaminopimeloyl-D-alanyl-D-alanine + di-trans,octa-cis-undecaprenyl phosphate = di-trans,octa-cis-undecaprenyl diphospho-N-acetyl-alpha-D-muramoyl-L-alanyl-D-glutamyl-meso-2,6-diaminopimeloyl-D-alanyl-D-alanine + UMP. It functions in the pathway cell wall biogenesis; peptidoglycan biosynthesis. Functionally, catalyzes the initial step of the lipid cycle reactions in the biosynthesis of the cell wall peptidoglycan: transfers peptidoglycan precursor phospho-MurNAc-pentapeptide from UDP-MurNAc-pentapeptide onto the lipid carrier undecaprenyl phosphate, yielding undecaprenyl-pyrophosphoryl-MurNAc-pentapeptide, known as lipid I. This chain is Phospho-N-acetylmuramoyl-pentapeptide-transferase, found in Burkholderia vietnamiensis (strain G4 / LMG 22486) (Burkholderia cepacia (strain R1808)).